A 94-amino-acid polypeptide reads, in one-letter code: Small ribosomal subunit protein bS18c (94 aa).

The protein belongs to the bacterial ribosomal protein bS18 family. Part of the 30S ribosomal subunit.

The protein localises to the plastid. The protein resides in the chloroplast. The polypeptide is Small ribosomal subunit protein bS18c (Manihot esculenta (Cassava)).